The following is a 213-amino-acid chain: Ribosomal RNA small subunit methyltransferase G (213 aa).

S-adenosyl-L-methionine is bound by residues Gly-77, Met-82, 104–106, and Arg-145; that span reads EKS.

The protein belongs to the methyltransferase superfamily. RNA methyltransferase RsmG family.

It is found in the cytoplasm. The catalysed reaction is guanosine(527) in 16S rRNA + S-adenosyl-L-methionine = N(7)-methylguanosine(527) in 16S rRNA + S-adenosyl-L-homocysteine. Functionally, specifically methylates the N7 position of guanine in position 527 of 16S rRNA. This chain is Ribosomal RNA small subunit methyltransferase G, found in Pelagibacter ubique (strain HTCC1062).